Consider the following 729-residue polypeptide: Isocitrate dehydrogenase [NADP] (729 aa).

Positions 83 and 85 each coordinate NADP(+). Residues serine 121, asparagine 124, arginine 128, arginine 134, and lysine 244 each contribute to the D-threo-isocitrate site. Asparagine 124 contacts NADP(+). Position 337 (aspartate 337) interacts with Mg(2+). Positions 407 and 534 each coordinate D-threo-isocitrate. Mg(2+)-binding residues include aspartate 535 and aspartate 539. 5 residues coordinate NADP(+): serine 572, histidine 576, arginine 587, aspartate 589, and arginine 636.

It belongs to the monomeric-type IDH family. Monomer. Mg(2+) serves as cofactor. It depends on Mn(2+) as a cofactor.

It carries out the reaction D-threo-isocitrate + NADP(+) = 2-oxoglutarate + CO2 + NADPH. Functionally, catalyzes the oxidative decarboxylation of isocitrate to 2-oxoglutarate and carbon dioxide with the concomitant reduction of NADP(+). This is Isocitrate dehydrogenase [NADP] from Corynebacterium efficiens (strain DSM 44549 / YS-314 / AJ 12310 / JCM 11189 / NBRC 100395).